Consider the following 276-residue polypeptide: UPF0328 protein ECU08_2080 (276 aa).

A disordered region spans residues 1–24 (MGIIDVQRSHLTATPSKERDAPAH).

It belongs to the UPF0328 family.

The chain is UPF0328 protein ECU08_2080 from Encephalitozoon cuniculi (strain GB-M1) (Microsporidian parasite).